Consider the following 98-residue polypeptide: Integration host factor subunit alpha (98 aa).

Positions 50–71 (GNFDLRDKNQRPGRNPKTGEDI) are disordered.

The protein belongs to the bacterial histone-like protein family. As to quaternary structure, heterodimer of an alpha and a beta chain.

Functionally, this protein is one of the two subunits of integration host factor, a specific DNA-binding protein that functions in genetic recombination as well as in transcriptional and translational control. This is Integration host factor subunit alpha from Proteus mirabilis (strain HI4320).